The chain runs to 130 residues: MAATQYYGTGRRKTSTARVFAKVGTGNIVVNQLPLDQYFGRETSRMVVRQPLELVEMTDKLDIFVTVKGGGNTGQAGAIRHGITRALMELDESLRPSLRAAGFVTRDARKVERKKVGLRKARRKPQFSKR.

This sequence belongs to the universal ribosomal protein uS9 family.

The protein is Small ribosomal subunit protein uS9 of Shewanella sediminis (strain HAW-EB3).